The primary structure comprises 225 residues: Uracil-DNA glycosylase (225 aa).

Catalysis depends on aspartate 65, which acts as the Proton acceptor.

This sequence belongs to the uracil-DNA glycosylase (UDG) superfamily. UNG family.

It localises to the cytoplasm. The catalysed reaction is Hydrolyzes single-stranded DNA or mismatched double-stranded DNA and polynucleotides, releasing free uracil.. In terms of biological role, excises uracil residues from the DNA which can arise as a result of misincorporation of dUMP residues by DNA polymerase or due to deamination of cytosine. This is Uracil-DNA glycosylase from Bacillus cereus (strain ZK / E33L).